Reading from the N-terminus, the 89-residue chain is Large ribosomal subunit protein bL27 (89 aa).

A disordered region spans residues 1 to 21 (MAHKKAGGSSRNGRDSAGRRL).

The protein belongs to the bacterial ribosomal protein bL27 family.

The polypeptide is Large ribosomal subunit protein bL27 (Erythrobacter litoralis (strain HTCC2594)).